A 274-amino-acid polypeptide reads, in one-letter code: Thiamine kinase (274 aa).

It belongs to the thiamine kinase family.

It carries out the reaction thiamine + ATP = thiamine phosphate + ADP + H(+). It participates in cofactor biosynthesis; thiamine diphosphate biosynthesis; thiamine phosphate from thiamine: step 1/1. In terms of biological role, catalyzes the ATP-dependent phosphorylation of thiamine to thiamine phosphate. Is involved in thiamine salvage. The chain is Thiamine kinase from Shigella sonnei (strain Ss046).